The primary structure comprises 454 residues: tRNA(Ile)-lysidine synthase (454 aa).

31–36 serves as a coordination point for ATP; that stretch reads SGGADS.

It belongs to the tRNA(Ile)-lysidine synthase family.

Its subcellular location is the cytoplasm. It carries out the reaction cytidine(34) in tRNA(Ile2) + L-lysine + ATP = lysidine(34) in tRNA(Ile2) + AMP + diphosphate + H(+). Its function is as follows. Ligates lysine onto the cytidine present at position 34 of the AUA codon-specific tRNA(Ile) that contains the anticodon CAU, in an ATP-dependent manner. Cytidine is converted to lysidine, thus changing the amino acid specificity of the tRNA from methionine to isoleucine. The chain is tRNA(Ile)-lysidine synthase from Porphyromonas gingivalis (strain ATCC 33277 / DSM 20709 / CIP 103683 / JCM 12257 / NCTC 11834 / 2561).